Consider the following 392-residue polypeptide: MSFLTLKDVDLKDKKVLVRVDFNVPVKDGKVTSKVRIEAAIPTIQYILDQGGAVILMSHLGRPTEGEYDSQFSLEPVAKALSEIINKPVKFAKDWLDGVDVKAGEIVMCENVRFNSGEKKSTDDLSKKIASLGDVFVMDAFATAHRAQASTYGVAKYIPVACAGILLTNEIQALEKALKSPKKPMAAIVGGSKVSTKLSVLNNLLDKVEILIVGGGIANTFIKAEGFDVGNSLYEQDLVAEATEILAKAKALGVNIPVPVDVRVAKEFSENAQAIIKKVSDVVADEMILDIGPESQKIIAELLKSANTILWNGPVGVFEFDNFAEGTKALSLAIAQSHAFSVAGGGDTIAAIEKFGIKDQVSYISTAGGAFLEFLEGKKLPAIEILKEKAIR.

Substrate contacts are provided by residues 21-23 (DFN), arginine 36, 59-62 (HLGR), arginine 113, and arginine 146. Residues lysine 197, glutamate 319, and 345–348 (GGDT) each bind ATP.

It belongs to the phosphoglycerate kinase family. As to quaternary structure, monomer.

The protein resides in the cytoplasm. It catalyses the reaction (2R)-3-phosphoglycerate + ATP = (2R)-3-phospho-glyceroyl phosphate + ADP. It functions in the pathway carbohydrate degradation; glycolysis; pyruvate from D-glyceraldehyde 3-phosphate: step 2/5. In Francisella tularensis subsp. tularensis (strain FSC 198), this protein is Phosphoglycerate kinase.